The following is a 588-amino-acid chain: Aspartate--tRNA ligase (588 aa).

E174 contributes to the L-aspartate binding site. An aspartate region spans residues 198–201 (QLFK). Residue R220 coordinates L-aspartate. Residues 220 to 222 (RDE) and Q229 contribute to the ATP site. H448 lines the L-aspartate pocket. E482 is an ATP binding site. R489 lines the L-aspartate pocket. Residue 534–537 (GIDR) participates in ATP binding.

It belongs to the class-II aminoacyl-tRNA synthetase family. Type 1 subfamily. Homodimer.

The protein resides in the cytoplasm. The catalysed reaction is tRNA(Asp) + L-aspartate + ATP = L-aspartyl-tRNA(Asp) + AMP + diphosphate. Functionally, catalyzes the attachment of L-aspartate to tRNA(Asp) in a two-step reaction: L-aspartate is first activated by ATP to form Asp-AMP and then transferred to the acceptor end of tRNA(Asp). The polypeptide is Aspartate--tRNA ligase (Xanthomonas campestris pv. campestris (strain 8004)).